The sequence spans 380 residues: Methylthioribose-1-phosphate isomerase (380 aa).

The active-site Proton donor is the aspartate 257.

Belongs to the eIF-2B alpha/beta/delta subunits family. MtnA subfamily.

Its subcellular location is the cytoplasm. It localises to the nucleus. It carries out the reaction 5-(methylsulfanyl)-alpha-D-ribose 1-phosphate = 5-(methylsulfanyl)-D-ribulose 1-phosphate. It participates in amino-acid biosynthesis; L-methionine biosynthesis via salvage pathway; L-methionine from S-methyl-5-thio-alpha-D-ribose 1-phosphate: step 1/6. Its function is as follows. Catalyzes the interconversion of methylthioribose-1-phosphate (MTR-1-P) into methylthioribulose-1-phosphate (MTRu-1-P). This chain is Methylthioribose-1-phosphate isomerase, found in Naegleria gruberi (Amoeba).